A 267-amino-acid chain; its full sequence is Hydroxypyruvate/pyruvate aldolase Bphyt_5830 (267 aa).

The active-site Proton acceptor is the H48. A divalent metal cation contacts are provided by E152 and D178.

It belongs to the HpcH/HpaI aldolase family. It depends on a divalent metal cation as a cofactor.

It catalyses the reaction D-glyceraldehyde + 3-hydroxypyruvate = 2-dehydro-D-galactonate. The catalysed reaction is D-glyceraldehyde + 3-hydroxypyruvate = (3R,4S,5R)-3,4,5,6-tetrahydroxy-2-oxohexanoate. It carries out the reaction D-glyceraldehyde + pyruvate = 2-dehydro-3-deoxy-L-galactonate. Functionally, aldolase which can catalyze in vitro the aldolisation reaction between hydroxypyruvate (HPA) or pyruvate (PA) and D-glyceraldehyde (D-GA). The condensation of hydroxypyruvate and D-glyceraldehyde produces 2-dehydro-D-galactonate as the major product and (3R,4S,5R)-3,4,5,6-tetrahydroxy-2-oxohexanoate. The condensation of pyruvate and D-glyceraldehyde produces 2-dehydro-3-deoxy-L-galactonate. The chain is Hydroxypyruvate/pyruvate aldolase Bphyt_5830 from Paraburkholderia phytofirmans (strain DSM 17436 / LMG 22146 / PsJN) (Burkholderia phytofirmans).